We begin with the raw amino-acid sequence, 282 residues long: ABC transporter I family member 21 (282 aa).

An ABC transporter domain is found at 13–248 (IRVSGMQFSY…KTSPNLLSVV (236 aa)). 46 to 53 (GANGSGKT) contacts ATP.

This sequence belongs to the ABC transporter superfamily. ABCI family. In terms of tissue distribution, expressed in root elongating zone and root meristem, as well as in elongating etiolated hypocotyls.

The protein resides in the cytoplasm. The sequence is that of ABC transporter I family member 21 (ABCI21) from Arabidopsis thaliana (Mouse-ear cress).